The primary structure comprises 376 residues: MFTLPPISLYIHIPWCLKKCGYCDFYSYVSKEIIPENKYIEHLLRDFERDLSLINNRNINTIFIGGGTPSLLKNTSIKNLLNGIKKRKIISKNIEISIEANPKTLEYQNFIQYKNSGINRFSLGIQTFNSKMLKKIERTYNSKDAMNAIIESKKISDNINLDLMYGLPGQSLEEALSDLQIAIQCNPSHISWYQLTIEPNTVFYAKKIQTPHQDVVFNMLIEGDKLLKKAGYKKYEISSYSKFNYQCQHNLNYWNFGDYIGIGCGSHGKITQKNGEIIRTIKNKNINDFLSGKYINSVYQVSKRDKIFEYFMNVFRLYKPIFKKHFRENTNIEESFIEKNIQIAIQEGFLINQSDCWHTTKKGKNFLNSLLEIFLK.

One can recognise a Radical SAM core domain in the interval 1–233; that stretch reads MFTLPPISLY…DKLLKKAGYK (233 aa). Y10 is an S-adenosyl-L-methionine binding site. [4Fe-4S] cluster-binding residues include C16, C20, and C23. S-adenosyl-L-methionine contacts are provided by residues G66, 67 to 68, E99, Q126, R138, and D162; that span reads GT.

This sequence belongs to the anaerobic coproporphyrinogen-III oxidase family. HemW subfamily. [4Fe-4S] cluster serves as cofactor.

The protein localises to the cytoplasm. Probably acts as a heme chaperone, transferring heme to an unknown acceptor. Binds one molecule of heme per monomer, possibly covalently. Binds 1 [4Fe-4S] cluster. The cluster is coordinated with 3 cysteines and an exchangeable S-adenosyl-L-methionine. The chain is Heme chaperone HemW from Buchnera aphidicola subsp. Acyrthosiphon pisum (strain APS) (Acyrthosiphon pisum symbiotic bacterium).